The sequence spans 180 residues: NADH-quinone oxidoreductase subunit B (180 aa).

4 residues coordinate [4Fe-4S] cluster: C59, C60, C124, and C154.

It belongs to the complex I 20 kDa subunit family. In terms of assembly, NDH-1 is composed of 14 different subunits. Subunits NuoB, C, D, E, F, and G constitute the peripheral sector of the complex. The cofactor is [4Fe-4S] cluster.

It localises to the cell inner membrane. It carries out the reaction a quinone + NADH + 5 H(+)(in) = a quinol + NAD(+) + 4 H(+)(out). NDH-1 shuttles electrons from NADH, via FMN and iron-sulfur (Fe-S) centers, to quinones in the respiratory chain. The immediate electron acceptor for the enzyme in this species is believed to be ubiquinone. Couples the redox reaction to proton translocation (for every two electrons transferred, four hydrogen ions are translocated across the cytoplasmic membrane), and thus conserves the redox energy in a proton gradient. This chain is NADH-quinone oxidoreductase subunit B, found in Beijerinckia indica subsp. indica (strain ATCC 9039 / DSM 1715 / NCIMB 8712).